The chain runs to 200 residues: Dipicolinate synthase subunit B (200 aa).

In terms of assembly, dipicolinate synthase likely consists of DpaA and DpaB, since both proteins are required for DPA synthesis.

It catalyses the reaction (S)-2,3-dihydrodipicolinate + NADP(+) = dipicolinate + NADPH + H(+). Together with DpaA, catalyzes the conversion of dihydrodipicolinate to dipicolinate (DPA), which constitutes up to 10% of the dry weight of the spore. The protein is Dipicolinate synthase subunit B (dpaB) of Bacillus subtilis (strain 168).